The chain runs to 116 residues: MQNKLLDIVENDQLRNDLPEFKSGDNIKVLVRIKEGAKERIQAFEGLVIAIKNYSTHKTFTVRKISNSVGVERTFPLNSPVIVSIEVLRKNKVRRSKLYYMRDLKGKSARLKELKK.

Belongs to the bacterial ribosomal protein bL19 family.

This protein is located at the 30S-50S ribosomal subunit interface and may play a role in the structure and function of the aminoacyl-tRNA binding site. This Mycoplasma mobile (strain ATCC 43663 / 163K / NCTC 11711) (Mesomycoplasma mobile) protein is Large ribosomal subunit protein bL19.